The chain runs to 333 residues: Casein kinase II subunit beta-1 (333 aa).

Residues 58 to 78 show a composition bias toward acidic residues; the sequence is VEPEDDDDEEEEDEEDEEDMS. Disordered regions lie at residues 58–92 and 282–333; these read VEPEDDDDEEEEDEEDEEDMSGGDGINKPHGERRH and ARRY…ESEL. Over residues 305–316 the composition is skewed to basic residues; sequence ASRRRGPPRRQK.

Belongs to the casein kinase 2 subunit beta family. In terms of assembly, tetramer composed of two alpha chains, one beta chain and one beta' chain. Post-translationally, phosphorylated by alpha subunit.

In terms of biological role, regulatory subunit of casein kinase II/CK2. As part of the kinase complex regulates the basal catalytic activity of the alpha subunit a constitutively active serine/threonine-protein kinase that phosphorylates a large number of substrates containing acidic residues C-terminal to the phosphorylated serine or threonine. This chain is Casein kinase II subunit beta-1 (ckb-1), found in Neurospora crassa (strain ATCC 24698 / 74-OR23-1A / CBS 708.71 / DSM 1257 / FGSC 987).